The chain runs to 61 residues: Small ribosomal subunit protein uS14 (61 aa).

Positions 24, 27, 40, and 43 each coordinate Zn(2+).

The protein belongs to the universal ribosomal protein uS14 family. Zinc-binding uS14 subfamily. As to quaternary structure, part of the 30S ribosomal subunit. Contacts proteins S3 and S10. The cofactor is Zn(2+).

Its function is as follows. Binds 16S rRNA, required for the assembly of 30S particles and may also be responsible for determining the conformation of the 16S rRNA at the A site. The sequence is that of Small ribosomal subunit protein uS14 from Streptococcus thermophilus (strain CNRZ 1066).